Reading from the N-terminus, the 31-residue chain is Photosystem II reaction center protein T (31 aa).

Residues 3 to 23 (SFAYVLILTLAIATLFFAIAF) traverse the membrane as a helical segment.

It belongs to the PsbT family. As to quaternary structure, PSII is composed of 1 copy each of membrane proteins PsbA, PsbB, PsbC, PsbD, PsbE, PsbF, PsbH, PsbI, PsbJ, PsbK, PsbL, PsbM, PsbT, PsbX, PsbY, PsbZ, Psb30/Ycf12, peripheral proteins PsbO, CyanoQ (PsbQ), PsbU, PsbV and a large number of cofactors. It forms dimeric complexes.

Its subcellular location is the cellular thylakoid membrane. Found at the monomer-monomer interface of the photosystem II (PS II) dimer, plays a role in assembly and dimerization of PSII. PSII is a light-driven water plastoquinone oxidoreductase, using light energy to abstract electrons from H(2)O, generating a proton gradient subsequently used for ATP formation. This is Photosystem II reaction center protein T from Parasynechococcus marenigrum (strain WH8102).